A 348-amino-acid polypeptide reads, in one-letter code: Propane 2-monooxygenase, reductase component (348 aa).

The 2Fe-2S ferredoxin-type domain maps to 5 to 95 (HKINFDPVDI…DCTIELLNFD (91 aa)). The [2Fe-2S] cluster site is built by Cys39, Cys44, Cys47, and Cys79. The FAD-binding FR-type domain maps to 105–206 (IQDVRTQVQA…TGPYGSFTLK (102 aa)).

The protein belongs to the bacterial ring-hydroxylating dioxygenase ferredoxin reductase family. The propane 2-monooxygenase multicomponent enzyme system is composed of an electron transfer component and a monooxygenase component interacting with the effector protein MimD. The electron transfer component is composed of a reductase (MimB), and the monooxygenase component is formed by a large subunit (MimA) and a small subunit (MimC). It depends on FAD as a cofactor. Requires [2Fe-2S] cluster as cofactor.

In terms of biological role, reductase component of the propane 2-monooxygenase multicomponent enzyme system which is involved in the degradation of propane via the O2-dependent hydroxylation of propane. Reductase catalyzes the transfer of electrons from NADH or NADPH to monooxygenase. The chain is Propane 2-monooxygenase, reductase component from Mycolicibacterium smegmatis (strain ATCC 700084 / mc(2)155) (Mycobacterium smegmatis).